The chain runs to 121 residues: uncharacterized protein (121 aa).

It localises to the mitochondrion. This is an uncharacterized protein from Arabidopsis thaliana (Mouse-ear cress).